The primary structure comprises 699 residues: Glycine--tRNA ligase beta subunit (699 aa).

It belongs to the class-II aminoacyl-tRNA synthetase family. Tetramer of two alpha and two beta subunits.

It is found in the cytoplasm. It carries out the reaction tRNA(Gly) + glycine + ATP = glycyl-tRNA(Gly) + AMP + diphosphate. The chain is Glycine--tRNA ligase beta subunit from Baumannia cicadellinicola subsp. Homalodisca coagulata.